The primary structure comprises 334 residues: Aspartate carbamoyltransferase catalytic subunit (334 aa).

2 residues coordinate carbamoyl phosphate: R71 and T72. K99 serves as a coordination point for L-aspartate. Carbamoyl phosphate contacts are provided by R121, H151, and Q154. L-aspartate contacts are provided by R184 and R239. Residues G280 and P281 each contribute to the carbamoyl phosphate site.

It belongs to the aspartate/ornithine carbamoyltransferase superfamily. ATCase family. In terms of assembly, heterododecamer (2C3:3R2) of six catalytic PyrB chains organized as two trimers (C3), and six regulatory PyrI chains organized as three dimers (R2).

It catalyses the reaction carbamoyl phosphate + L-aspartate = N-carbamoyl-L-aspartate + phosphate + H(+). It functions in the pathway pyrimidine metabolism; UMP biosynthesis via de novo pathway; (S)-dihydroorotate from bicarbonate: step 2/3. Its function is as follows. Catalyzes the condensation of carbamoyl phosphate and aspartate to form carbamoyl aspartate and inorganic phosphate, the committed step in the de novo pyrimidine nucleotide biosynthesis pathway. The protein is Aspartate carbamoyltransferase catalytic subunit of Pseudomonas syringae pv. syringae (strain B728a).